A 185-amino-acid chain; its full sequence is uncharacterized protein (185 aa).

The protein to M.thermoautotrophicum MTH236.

This is an uncharacterized protein from Methanocaldococcus jannaschii (strain ATCC 43067 / DSM 2661 / JAL-1 / JCM 10045 / NBRC 100440) (Methanococcus jannaschii).